Here is a 205-residue protein sequence, read N- to C-terminus: Tumor suppressor candidate gene 1 protein homolog (205 aa).

Residues 1–12 show a composition bias toward low complexity; the sequence is MWRMRGGATRRG. The interval 1–49 is disordered; the sequence is MWRMRGGATRRGSCGGEGGGSRGESGRLGRAREGGGGGGGVGWRGRAGG. The span at 13–23 shows a compositional bias: gly residues; it reads SCGGEGGGSRG. Residues 24–33 are compositionally biased toward basic and acidic residues; the sequence is ESGRLGRARE. Positions 34–48 are enriched in gly residues; the sequence is GGGGGGGVGWRGRAG. A coiled-coil region spans residues 66-110; the sequence is LEALRARDERDRQNARLREENARLRLENRRLRRENRSLFRQALRL. Disordered stretches follow at residues 113-149 and 174-205; these read DSGE…SPRA and GARP…RPWL. Ser146 carries the post-translational modification Phosphoserine. Positions 196-205 are enriched in basic and acidic residues; it reads HDPDVPRPWL.

This is Tumor suppressor candidate gene 1 protein homolog (Tusc1) from Mus musculus (Mouse).